Here is a 436-residue protein sequence, read N- to C-terminus: GTPase Der (436 aa).

2 consecutive EngA-type G domains span residues 4–167 (PVVA…PKEE) and 176–351 (VKFS…DNHS). GTP contacts are provided by residues 10-17 (GRPNVGKS), 57-61 (DTGGI), 119-122 (NKVD), 182-189 (GRPNVGKS), 229-233 (DTAGM), and 294-297 (NKWD). One can recognise a KH-like domain in the interval 352–436 (LRVQSSMLND…PIRVIARKRK (85 aa)).

This sequence belongs to the TRAFAC class TrmE-Era-EngA-EngB-Septin-like GTPase superfamily. EngA (Der) GTPase family. As to quaternary structure, associates with the 50S ribosomal subunit.

Functionally, GTPase that plays an essential role in the late steps of ribosome biogenesis. This Listeria welshimeri serovar 6b (strain ATCC 35897 / DSM 20650 / CCUG 15529 / CIP 8149 / NCTC 11857 / SLCC 5334 / V8) protein is GTPase Der.